Here is a 110-residue protein sequence, read N- to C-terminus: Chagasin (110 aa).

Positions 29–34 (NPTTGF) match the BC loop motif. The short motif at 59 to 68 (PPDSKLLGAG) is the DE loop element. Residues 91 to 100 (RPWTGPSHDS) carry the FG loop motif.

This sequence belongs to the protease inhibitor I42 family. In terms of assembly, interacts with cruzipain.

The protein resides in the flagellar pocket. Its subcellular location is the cytoplasmic vesicle. It localises to the cell surface. In terms of biological role, cysteine protease inhibitor. Inhibits cysteine protease cruzipain. This Trypanosoma cruzi protein is Chagasin (cha).